A 64-amino-acid polypeptide reads, in one-letter code: Alpha-conotoxin GI (64 aa).

A signal peptide spans 1–21 (MGMRMMFTVFLLVVLATTVVS). Residues 22-49 (FPSERASDGRDDTAKDEGSDMDKLVEKK) constitute a propeptide that is removed on maturation. 2 cysteine pairs are disulfide-bonded: Cys-51/Cys-56 and Cys-52/Cys-62. Residue Cys-62 is modified to Cysteine amide.

It belongs to the conotoxin A superfamily. Not hydroxylated; hydroxylation, on a synthetic hydroxylated GI, improves its folding but impairs its activity against target receptors. As to expression, expressed by the venom duct.

Its subcellular location is the secreted. In terms of biological role, alpha-conotoxins act on postsynaptic membranes, they bind to the nicotinic acetylcholine receptors (nAChR) and thus inhibit them. Reversibly inhibits mammalian muscle nAChR (IC(50)=339 nM on adult subtype (alpha-1-beta-1-gamma-delta/CHRNA1-CHRNB1-CHRNG-CHRND) and IC(50)=5.86-995 nM on fetal subtype (alpha-1-beta-1-delta-epsilon/CHRNA1-CHRNB1-CHRND-CHRNE)). The higher affinity site is the alpha/delta site on mouse muscle-derived BC3H-1 receptor, and the other site (alpha/gamma site) on nicotinic receptors from Torpedo californica electric organ. This chain is Alpha-conotoxin GI, found in Conus geographus (Geography cone).